Here is a 731-residue protein sequence, read N- to C-terminus: Two pore channel protein 2 (731 aa).

At 1-68 the chain is on the cytoplasmic side; it reads MAAEEQPLLG…RWYYSNVCQR (68 aa). A helical transmembrane segment spans residues 69–89; sequence VLGFIIFLILILAFVEVPSSF. Residues 90 to 111 are Extracellular-facing; it reads TKTADVRYRSQPWQPPCGLTET. The helical transmembrane segment at 112-132 threads the bilayer; sequence IEAFCLLAFLVDLSVKGYLVG. The Cytoplasmic portion of the chain corresponds to 133-139; the sequence is QAQLQQN. Residues 140 to 160 form a helical membrane-spanning segment; sequence LWLLAYFMVLVVSVVDWIVSL. Residues 161–167 lie on the Extracellular side of the membrane; the sequence is SLACEEP. Residues 168–188 traverse the membrane as a helical segment; sequence LRMRRLLRPFFLLQNSSMMKK. Positions 187–191 are interaction with phosphatidylinositol 3,5-bisphosphate; sequence KKTLK. Over 189-203 the chain is Cytoplasmic; sequence TLKCIRWSLPEMASV. The helical transmembrane segment at 204–224 threads the bilayer; that stretch reads GLLLAIHLCLFTIIGMLLFTI. The Extracellular segment spans residues 225–238; it reads GEKDEAQDQERLAY. Positions 239-263 form an intramembrane region, helical; Pore-forming; it reads FRNLPEALTSLLVLLTTSNNPDVMI. At 264-270 the chain is on the extracellular side; it reads PAYTQNR. The helical transmembrane segment at 271 to 291 threads the bilayer; the sequence is AFALFFIVFTLIGSLFLMNLL. At 292–417 the chain is on the cytoplasmic side; the sequence is TAIIYNQFRG…TAQFIFSHHY (126 aa). Residues 418–438 form a helical membrane-spanning segment; it reads FDYLGNLVALGNLLSICVFLV. Residues 439 to 449 are Extracellular-facing; it reads LDSDLLPGERD. A helical transmembrane segment spans residues 450 to 470; that stretch reads DFVLGILDYIFILYYLLELLF. Topologically, residues 471–486 are cytoplasmic; sequence KVFALGLPGYLSYHSN. The chain crosses the membrane as a helical span at residues 487–507; it reads VFDGLLTIILLVSEICTLAVY. Residues 508-524 are Extracellular-facing; the sequence is RLPHSGWKPEQYGPLSL. A helical transmembrane segment spans residues 525-542; the sequence is WDMTRLMNTLIVFRFLRI. Residues 543 to 564 lie on the Cytoplasmic side of the membrane; that stretch reads IPNIKPMAEVANTILGLIPNLR. Residues 565 to 585 form a helical membrane-spanning segment; that stretch reads AFGGILVVAYYVFAMIGINLF. Topologically, residues 586–618 are extracellular; that stretch reads RGVIVPPGNSSLVPDNNSAVCGSFEQLGYWPNN. N-linked (GlcNAc...) asparagine glycosylation is found at Asn594 and Asn601. Positions 619–641 form an intramembrane region, helical; Pore-forming; that stretch reads FDDFAAALITLWNVMVVNNWQVI. At 642–656 the chain is on the extracellular side; it reads LEAYKRYAGPWSMVY. The helical transmembrane segment at 657–677 threads the bilayer; the sequence is FVLWWLVSSVIWINLFLALLL. Residues 678 to 731 are Cytoplasmic-facing; that stretch reads ENFLHRWDPQGHKQLLVGTKQMSVELMFRDILEEPKEEELMEKLHKHPHLHLCR.

It belongs to the calcium channel alpha-1 subunit (TC 1.A.1.11) family. Two pore calcium channel subfamily. In terms of assembly, homodimer. Interacts with LRRK2. Interacts with HAX1. Interacts with MTOR; the interaction is required for TPCN2 ATP sensitivity. Found in a complex with LSM12, TPCN1 and TPCN2. Interacts with LSM12. In terms of processing, N-glycosylated. In terms of tissue distribution, widely expressed. Highly expressed in macrophages. Expressed in pigmented cells.

Its subcellular location is the late endosome membrane. It localises to the lysosome membrane. The protein localises to the melanosome membrane. It carries out the reaction Ca(2+)(in) = Ca(2+)(out). The catalysed reaction is Na(+)(in) = Na(+)(out). With respect to regulation, regulated by Mg(2+) ions, cytosolic Mg(2+) selectively inhibits outward current while lysosomal Mg(2+) modestly inhibits both the outward and inward currents. In the absence of Mg(2+), NAADP readily activates TPCN2, with properties similar to PI(3,5)P2. Na(+) current is inhibited by ATP in a MTORC-dependent manner. ATP sensitivity is independent of PI(3,5)P2. Both current elicited by PI(3,5)P2 as well as NAADP are inhibited by tetrandrine. Its function is as follows. Intracellular channel initially characterized as a non-selective Ca(2+)-permeable channel activated by NAADP (nicotinic acid adenine dinucleotide phosphate), it is also a highly-selective Na(+) channel activated directly by PI(3,5)P2 (phosphatidylinositol 3,5-bisphosphate). Localizes to the lysosomal and late endosome membranes where it regulates organellar membrane excitability, membrane trafficking, and pH homeostasis. Is associated with a plethora of physiological processes, including mTOR-dependent nutrient sensing, skin pigmentation and autophagy. Ion selectivity is not fixed but rather agonist-dependent and under defined ionic conditions, can be readily activated by both NAADP and PI(3,5)P2. As calcium channel, it increases the pH in the lysosomal lumen, as sodium channel, it promotes lysosomal exocytosis. Plays a crucial role in endolysosomal trafficking in the endolysosomal degradation pathway and is potentially involved in the homeostatic control of many macromolecules and cell metabolites. Also expressed in melanosomes of pigmented cells where mediates a Ca(2+) channel and/or PI(3,5)P2-activated melanosomal Na(+) channel to acidify pH and inhibit tyrosinase activity required for melanogenesis and pigmentation. Unlike the voltage-dependent TPCN1, TPCN2 is voltage independent and can be activated solely by PI(3,5)P2 binding. In contrast, PI(4,5)P2, PI(3,4)P2, PI(3)P and PI(5)P have no obvious effect on channel activation. (Microbial infection) During Ebola virus (EBOV) infection, controls the movement of endosomes containing virus particles and is required by EBOV to escape from the endosomal network into the cell cytoplasm. This is Two pore channel protein 2 from Mus musculus (Mouse).